A 308-amino-acid polypeptide reads, in one-letter code: Rhamnose-binding lectin (308 aa).

Positions 1–23 (MMLILKLSLLSLLIATPGLLVSG) are cleaved as a signal peptide. 3 SUEL-type lectin domains span residues 27 to 115 (ITCY…SFDC), 123 to 213 (ICEH…YICT), and 218 to 308 (VCEG…YACV). The N-linked (GlcNAc...) asparagine glycan is linked to Asn110.

Homotrimer. Expressed in eggs, but not in liver.

It is found in the secreted. In terms of biological role, lectin that binds L-rhamnose. Also binds monosaccharides possessing steric similarity to the hydroxyl group orientation at C2 and C4 of the pyranose ring structure of L-rhamnose, such as L-mannose and L-lyxose. The polypeptide is Rhamnose-binding lectin (Silurus asotus (Amur catfish)).